Reading from the N-terminus, the 421-residue chain is MNIPKILNNNLVLKRIFCRNYSVKVLGIETSCDDTAVAIVNEKREILSSERYTERAIQRQQGGINPSVCALQHRENLPRLIEKCLNDAGTSPKDLDAVAVTVTPGLVIALKEGISAAIGFAKKHRLPLIPVHHMRAHALSILLVDDSVRFPFSAVLLSGGHALISVAEDVEKFKLYGQSVSGSPGECIDKVARQLGDLGSEFDGIHVGAAVEILASRASADGHLRYPIFLPNVPKANMNFDQIKGSYLNLLERLRKNSETSIDIPDFCASLQNTVARHISSKLHIFFESLSEQEKLPKQLVIGGGVAANQYIFGAISKLSAAHNVTTIKVLLSLCTDNAEMIAYSGLLMLVNRSEAIWWRPNDIPDTIYAHARSDIGTDASSEIIDTPRRKLVTSTIHGTERIRFRNLDDFKKPKSPKTTE.

The N-terminal 22 residues, 1 to 22 (MNIPKILNNNLVLKRIFCRNYS), are a transit peptide targeting the mitochondrion. Residues His-133 and His-137 each contribute to the a divalent metal cation site. Substrate contacts are provided by residues 156–160 (LLSGG), Asp-189, Gly-208, Glu-212, 308–309 (AN), and Thr-336. Asp-337 provides a ligand contact to a divalent metal cation.

It belongs to the KAE1 / TsaD family. In terms of assembly, homodimer. The cofactor is a divalent metal cation.

It is found in the mitochondrion. The enzyme catalyses L-threonylcarbamoyladenylate + adenosine(37) in tRNA = N(6)-L-threonylcarbamoyladenosine(37) in tRNA + AMP + H(+). Required for the formation of a threonylcarbamoyl group on adenosine at position 37 (t(6)A37) in mitochondrial tRNAs that read codons beginning with adenine. Probably involved in the transfer of the threonylcarbamoyl moiety of threonylcarbamoyl-AMP (TC-AMP) to the N6 group of A37. Involved in mitochondrial genome maintenance. The polypeptide is Probable tRNA N6-adenosine threonylcarbamoyltransferase, mitochondrial (Caenorhabditis elegans).